Consider the following 345-residue polypeptide: Phosphate acyltransferase (345 aa).

It belongs to the PlsX family. In terms of assembly, homodimer. Probably interacts with PlsY.

The protein resides in the cytoplasm. It carries out the reaction a fatty acyl-[ACP] + phosphate = an acyl phosphate + holo-[ACP]. The protein operates within lipid metabolism; phospholipid metabolism. Functionally, catalyzes the reversible formation of acyl-phosphate (acyl-PO(4)) from acyl-[acyl-carrier-protein] (acyl-ACP). This enzyme utilizes acyl-ACP as fatty acyl donor, but not acyl-CoA. This Wolbachia sp. subsp. Brugia malayi (strain TRS) protein is Phosphate acyltransferase.